The primary structure comprises 372 residues: Protein RecA (372 aa).

66 to 73 (GPESSGKT) contributes to the ATP binding site. The interval 328 to 359 (GVGVRPEEPTATESGPDAATAESAPAVPAPAT) is disordered. The span at 345–359 (AATAESAPAVPAPAT) shows a compositional bias: low complexity.

It belongs to the RecA family.

Its subcellular location is the cytoplasm. Can catalyze the hydrolysis of ATP in the presence of single-stranded DNA, the ATP-dependent uptake of single-stranded DNA by duplex DNA, and the ATP-dependent hybridization of homologous single-stranded DNAs. It interacts with LexA causing its activation and leading to its autocatalytic cleavage. This chain is Protein RecA, found in Streptomyces ambofaciens.